A 184-amino-acid chain; its full sequence is MGNSLFKGFSKPFSRLFSNKEMRILMLGLDAAGKTTILYKLKLNQSVVTIPTVGFNVETVTYKNIKFNVWDVGGQDKIRPLWRHYFTGTKGLIFVVDSADSNRISEARQELHRIISDREMRDCLLLVLANKQDLPGALSPAQITDVLQLDKLKDRLWNVQPTCALTGDGLLEGLAWLSQNAKLK.

Glycine 2 carries the N-myristoyl glycine lipid modification. Residues 28 to 35, 71 to 75, and 130 to 133 contribute to the GTP site; these read GLDAAGKT, DVGGQ, and NKQD.

The protein belongs to the small GTPase superfamily. Arf family.

The protein localises to the cell membrane. In terms of biological role, GTP-binding protein that functions as a molecular switch for the activation of 'new end take off' (NETO), a process in which the directions of cell growth change from a monopolar manner to a bipolar manner in fission yeast. Involved in supplying membrane to the growing new end. This is ADP-ribosylation factor 6 (arf6) from Schizosaccharomyces pombe (strain 972 / ATCC 24843) (Fission yeast).